The chain runs to 739 residues: Phosphoribosylformylglycinamidine synthase subunit PurL (739 aa).

H52 is a catalytic residue. Residues Y55 and K94 each coordinate ATP. E96 lines the Mg(2+) pocket. Residues 97-100 (SHNH) and R119 each bind substrate. The active-site Proton acceptor is H98. Position 120 (D120) interacts with Mg(2+). Q243 serves as a coordination point for substrate. Residue D271 participates in Mg(2+) binding. 315 to 317 (ESQ) is a binding site for substrate. Residues D498 and G535 each contribute to the ATP site. N536 contacts Mg(2+). S538 lines the substrate pocket.

This sequence belongs to the FGAMS family. As to quaternary structure, monomer. Part of the FGAM synthase complex composed of 1 PurL, 1 PurQ and 2 PurS subunits.

Its subcellular location is the cytoplasm. The catalysed reaction is N(2)-formyl-N(1)-(5-phospho-beta-D-ribosyl)glycinamide + L-glutamine + ATP + H2O = 2-formamido-N(1)-(5-O-phospho-beta-D-ribosyl)acetamidine + L-glutamate + ADP + phosphate + H(+). Its pathway is purine metabolism; IMP biosynthesis via de novo pathway; 5-amino-1-(5-phospho-D-ribosyl)imidazole from N(2)-formyl-N(1)-(5-phospho-D-ribosyl)glycinamide: step 1/2. Functionally, part of the phosphoribosylformylglycinamidine synthase complex involved in the purines biosynthetic pathway. Catalyzes the ATP-dependent conversion of formylglycinamide ribonucleotide (FGAR) and glutamine to yield formylglycinamidine ribonucleotide (FGAM) and glutamate. The FGAM synthase complex is composed of three subunits. PurQ produces an ammonia molecule by converting glutamine to glutamate. PurL transfers the ammonia molecule to FGAR to form FGAM in an ATP-dependent manner. PurS interacts with PurQ and PurL and is thought to assist in the transfer of the ammonia molecule from PurQ to PurL. The sequence is that of Phosphoribosylformylglycinamidine synthase subunit PurL from Caulobacter vibrioides (strain ATCC 19089 / CIP 103742 / CB 15) (Caulobacter crescentus).